A 290-amino-acid polypeptide reads, in one-letter code: tRNA pseudouridine synthase A (290 aa).

Asp-56 functions as the Nucleophile in the catalytic mechanism. Position 109 (Tyr-109) interacts with substrate.

It belongs to the tRNA pseudouridine synthase TruA family.

The catalysed reaction is uridine(38/39/40) in tRNA = pseudouridine(38/39/40) in tRNA. Functionally, formation of pseudouridine at positions 38, 39 and 40 in the anticodon stem and loop of transfer RNAs. The sequence is that of tRNA pseudouridine synthase A from Methanobrevibacter smithii (strain ATCC 35061 / DSM 861 / OCM 144 / PS).